Here is a 204-residue protein sequence, read N- to C-terminus: Transcription factor bHLH120 (204 aa).

2 disordered regions span residues M1–K27 and K93–P116. One can recognise a bHLH domain in the interval E26 to T78.

In terms of assembly, homodimer.

The protein resides in the nucleus. The polypeptide is Transcription factor bHLH120 (BHLH120) (Arabidopsis thaliana (Mouse-ear cress)).